A 631-amino-acid polypeptide reads, in one-letter code: tRNA uridine 5-carboxymethylaminomethyl modification enzyme MnmG (631 aa).

FAD contacts are provided by residues 13 to 18 (GGGHAG), Val-125, and Ser-180. 273 to 287 (GPRYCPSIEDKVNRY) is a binding site for NAD(+). Gln-370 serves as a coordination point for FAD.

It belongs to the MnmG family. As to quaternary structure, homodimer. Heterotetramer of two MnmE and two MnmG subunits. It depends on FAD as a cofactor.

The protein localises to the cytoplasm. In terms of biological role, NAD-binding protein involved in the addition of a carboxymethylaminomethyl (cmnm) group at the wobble position (U34) of certain tRNAs, forming tRNA-cmnm(5)s(2)U34. In Alcanivorax borkumensis (strain ATCC 700651 / DSM 11573 / NCIMB 13689 / SK2), this protein is tRNA uridine 5-carboxymethylaminomethyl modification enzyme MnmG.